A 357-amino-acid polypeptide reads, in one-letter code: 3-isopropylmalate dehydrogenase (357 aa).

76-89 (GPQWDTIDPALRPE) is a binding site for NAD(+). Positions 96, 106, 134, and 224 each coordinate substrate. Residues Asp-224, Asp-248, and Asp-252 each coordinate Mg(2+). 282–294 (GSAPDIAGQGVAN) is an NAD(+) binding site.

Belongs to the isocitrate and isopropylmalate dehydrogenases family. LeuB type 1 subfamily. As to quaternary structure, homodimer. Mg(2+) serves as cofactor. Mn(2+) is required as a cofactor.

Its subcellular location is the cytoplasm. The enzyme catalyses (2R,3S)-3-isopropylmalate + NAD(+) = 4-methyl-2-oxopentanoate + CO2 + NADH. It functions in the pathway amino-acid biosynthesis; L-leucine biosynthesis; L-leucine from 3-methyl-2-oxobutanoate: step 3/4. In terms of biological role, catalyzes the oxidation of 3-carboxy-2-hydroxy-4-methylpentanoate (3-isopropylmalate) to 3-carboxy-4-methyl-2-oxopentanoate. The product decarboxylates to 4-methyl-2 oxopentanoate. This chain is 3-isopropylmalate dehydrogenase, found in Xylella fastidiosa (strain Temecula1 / ATCC 700964).